Consider the following 663-residue polypeptide: Transketolase 2 (663 aa).

Substrate is bound at residue H25. Thiamine diphosphate is bound by residues H65 and 113–115 (GPL). D154 is a binding site for Mg(2+). 2 residues coordinate thiamine diphosphate: G155 and N184. Mg(2+)-binding residues include N184 and I186. 3 residues coordinate substrate: H259, R356, and S383. H259 lines the thiamine diphosphate pocket. The active-site Proton donor is E410. Residue F436 coordinates thiamine diphosphate. H460, D468, and R519 together coordinate substrate.

The protein belongs to the transketolase family. Homodimer. Mg(2+) is required as a cofactor. It depends on Ca(2+) as a cofactor. The cofactor is Mn(2+). Co(2+) serves as cofactor. Requires thiamine diphosphate as cofactor.

It carries out the reaction D-sedoheptulose 7-phosphate + D-glyceraldehyde 3-phosphate = aldehydo-D-ribose 5-phosphate + D-xylulose 5-phosphate. Catalyzes the transfer of a two-carbon ketol group from a ketose donor to an aldose acceptor, via a covalent intermediate with the cofactor thiamine pyrophosphate. The protein is Transketolase 2 (tkt2) of Vibrio vulnificus (strain CMCP6).